Here is a 266-residue protein sequence, read N- to C-terminus: Dihydropteroate synthase (266 aa).

Positions 12–260 constitute a Pterin-binding domain; the sequence is AAIMGILNVT…DVKANQDIVA (249 aa). Position 19 (Asn19) interacts with Mg(2+). Residues Thr59, Asp93, Asn112, Asp176, Lys212, and 248–250 contribute to the (7,8-dihydropterin-6-yl)methyl diphosphate site; that span reads RVH.

This sequence belongs to the DHPS family. In terms of assembly, homodimer or homotrimer. Requires Mg(2+) as cofactor.

It catalyses the reaction (7,8-dihydropterin-6-yl)methyl diphosphate + 4-aminobenzoate = 7,8-dihydropteroate + diphosphate. The protein operates within cofactor biosynthesis; tetrahydrofolate biosynthesis; 7,8-dihydrofolate from 2-amino-4-hydroxy-6-hydroxymethyl-7,8-dihydropteridine diphosphate and 4-aminobenzoate: step 1/2. In terms of biological role, catalyzes the condensation of para-aminobenzoate (pABA) with 6-hydroxymethyl-7,8-dihydropterin diphosphate (DHPt-PP) to form 7,8-dihydropteroate (H2Pte), the immediate precursor of folate derivatives. This is Dihydropteroate synthase (folP) from Streptococcus pyogenes serotype M1.